The primary structure comprises 155 residues: UPF0251 protein Paes_1249 (155 aa).

This sequence belongs to the UPF0251 family.

The chain is UPF0251 protein Paes_1249 from Prosthecochloris aestuarii (strain DSM 271 / SK 413).